Reading from the N-terminus, the 153-residue chain is MWMKTVFWGLLVFMLVATTMAVEYGARSHNSGPWSWCNPATGYKVSALTGCRAMVKLQCVGSQVPEAVLRDCCQQLADINNEWCRCGDLSSMLRSVYQELGVREGKEVLPGCRKEVMKLTAASVPEVCKVPIPNPSGDRAGVCYGDWAAYPDV.

Residues 1-30 (MWMKTVFWGLLVFMLVATTMAVEYGARSHN) form the signal peptide. Intrachain disulfides connect cysteine 37/cysteine 84, cysteine 51/cysteine 72, cysteine 59/cysteine 112, cysteine 73/cysteine 128, and cysteine 86/cysteine 143.

Belongs to the protease inhibitor I6 (cereal trypsin/alpha-amylase inhibitor) family. As to quaternary structure, monomer. In terms of processing, the disulfide bonds are essential for the inhibitor activity. Endosperm.

Its subcellular location is the secreted. Functionally, alpha-amylase inhibitor. In Triticum aestivum (Wheat), this protein is Alpha-amylase inhibitor 0.28 (IMA1).